The chain runs to 166 residues: Urease accessory protein UreE (166 aa).

Belongs to the UreE family.

Its subcellular location is the cytoplasm. In terms of biological role, involved in urease metallocenter assembly. Binds nickel. Probably functions as a nickel donor during metallocenter assembly. The protein is Urease accessory protein UreE of Azotobacter vinelandii (strain DJ / ATCC BAA-1303).